We begin with the raw amino-acid sequence, 208 residues long: Ribosomal RNA small subunit methyltransferase G (208 aa).

Residues glycine 75, leucine 80, 126 to 127 (VE), and arginine 141 each bind S-adenosyl-L-methionine.

It belongs to the methyltransferase superfamily. RNA methyltransferase RsmG family.

The protein resides in the cytoplasm. The catalysed reaction is guanosine(527) in 16S rRNA + S-adenosyl-L-methionine = N(7)-methylguanosine(527) in 16S rRNA + S-adenosyl-L-homocysteine. Functionally, specifically methylates the N7 position of guanine in position 527 of 16S rRNA. In Marinomonas sp. (strain MWYL1), this protein is Ribosomal RNA small subunit methyltransferase G.